The chain runs to 506 residues: Methylthioalkylmalate synthase 1, chloroplastic (506 aa).

The transit peptide at 1-49 directs the protein to the chloroplast; sequence MASSLLTSSVMIPTTGSTVVGRSVLPFQSSLHSLRLTHSYKNPALFISC. The 275-residue stretch at 85–359 folds into the Pyruvate carboxyltransferase domain; that stretch reads VRVFDTTLRD…YTKIDTRQIM (275 aa). At Ser-98 the chain carries Phosphoserine.

The protein belongs to the alpha-IPM synthase/homocitrate synthase family. In terms of assembly, monomer. Mn(2+) serves as cofactor. Highly expressed in leaves, flowers, roots and siliques. Not detected in flowers in PubMed:12432038.

The protein resides in the plastid. It is found in the chloroplast. The enzyme catalyses an omega-(methylsulfanyl)-2-oxoalkanoate + acetyl-CoA + H2O = a 2-(omega-methylsulfanyl)alkylmalate + CoA + H(+). With respect to regulation, 1 mM DTT required for activity. Activated by ATP and inhibited by iodoacetamide. In terms of biological role, determines the side chain length of aliphatic glucosinolate structures. Catalyzes exclusively the condensation reactions of both the first and second methionine carbon chain elongation. In Arabidopsis thaliana (Mouse-ear cress), this protein is Methylthioalkylmalate synthase 1, chloroplastic (MAM1).